The following is a 173-amino-acid chain: Large ribosomal subunit protein uL10 (173 aa).

This sequence belongs to the universal ribosomal protein uL10 family. Part of the ribosomal stalk of the 50S ribosomal subunit. The N-terminus interacts with L11 and the large rRNA to form the base of the stalk. The C-terminus forms an elongated spine to which L12 dimers bind in a sequential fashion forming a multimeric L10(L12)X complex.

Its function is as follows. Forms part of the ribosomal stalk, playing a central role in the interaction of the ribosome with GTP-bound translation factors. The polypeptide is Large ribosomal subunit protein uL10 (Cupriavidus metallidurans (strain ATCC 43123 / DSM 2839 / NBRC 102507 / CH34) (Ralstonia metallidurans)).